The chain runs to 333 residues: Glycerol-3-phosphate dehydrogenase [NAD(P)+] (333 aa).

Phenylalanine 19, arginine 40, arginine 41, and lysine 113 together coordinate NADPH. Residues lysine 113 and glycine 141 each coordinate sn-glycerol 3-phosphate. Alanine 145 lines the NADPH pocket. Residues lysine 196, aspartate 249, serine 259, arginine 260, and asparagine 261 each contribute to the sn-glycerol 3-phosphate site. The active-site Proton acceptor is the lysine 196. Arginine 260 is an NADPH binding site. 2 residues coordinate NADPH: valine 282 and glutamate 283.

This sequence belongs to the NAD-dependent glycerol-3-phosphate dehydrogenase family.

It localises to the cytoplasm. It catalyses the reaction sn-glycerol 3-phosphate + NAD(+) = dihydroxyacetone phosphate + NADH + H(+). The catalysed reaction is sn-glycerol 3-phosphate + NADP(+) = dihydroxyacetone phosphate + NADPH + H(+). It participates in membrane lipid metabolism; glycerophospholipid metabolism. Functionally, catalyzes the reduction of the glycolytic intermediate dihydroxyacetone phosphate (DHAP) to sn-glycerol 3-phosphate (G3P), the key precursor for phospholipid synthesis. This is Glycerol-3-phosphate dehydrogenase [NAD(P)+] from Sinorhizobium fredii (strain NBRC 101917 / NGR234).